A 631-amino-acid polypeptide reads, in one-letter code: MCGIVGYIGTQTAVNILIEGLERLEYRGYDSAGIATVTEGKIESVRAKGKLFNLKEKLENHSNFSRLGIGHTRWATHGKPEEHNAHPHLDNQQRIAVVQNGIIENYQTLRDQLKEKGYQFYSETDTEVIPILIADILKDLPSDDPDEALLEAIGKAVHQLEGAFAIAVLDAHCPEQLIVARQQAPLILGFGQGEFFCASDVTALVHHTTTVLSLENGEIARLTPLGVEVYDFNLKRVRKLPRTLDWSATTVEKQGFRHFMLKEIYEQPAVVRTCLATYLNEQWRAADHPSHSPVFLGLDPQLTKNLQHIQVLACGTSWHAGLVGKYLLEQLAGIPTTVHYASEFRYAAPPLTPHTLTIGVTQSGETADTLAALEMEKQRRLTLEDDYKPLILGITNRPESTLATMVNEIINTHAGIEIGVAATKTFVAQVLAFYFLALDIAFQRHSLSLEAIEHIMVGLRQLPAQIETILEQQGSAIEALAHEFAETQDFIFLGRGINFPIALEGALKLKEISYIHAEGYPAGEMKHGPIALLDAKVPVVAIAMPGSVHDKVISNAQEAKARDARLIGVTPMDDSQARSVFDDLLLVPHVEEMLSPIVAVIPLQLLSYHIAARRGLDVDQPRNLAKSVTVE.

The Nucleophile; for GATase activity role is filled by Cys2. One can recognise a Glutamine amidotransferase type-2 domain in the interval 2–225 (CGIVGYIGTQ…NGEIARLTPL (224 aa)). SIS domains are found at residues 298-446 (LDPQ…QRHS) and 480-621 (LAHE…VDQP). The active-site For Fru-6P isomerization activity is the Lys626.

Homodimer.

It localises to the cytoplasm. The catalysed reaction is D-fructose 6-phosphate + L-glutamine = D-glucosamine 6-phosphate + L-glutamate. In terms of biological role, catalyzes the first step in hexosamine metabolism, converting fructose-6P into glucosamine-6P using glutamine as a nitrogen source. This is Glutamine--fructose-6-phosphate aminotransferase [isomerizing] from Synechocystis sp. (strain ATCC 27184 / PCC 6803 / Kazusa).